The chain runs to 687 residues: Mitochondrial 15S rRNA processing factor ppr3 (687 aa).

The N-terminal 49 residues, 1–49, are a transit peptide targeting the mitochondrion; the sequence is MLNKCSGSLTLLAVRRFCGPCRRLHYHKDNPNNINIAKNLLNNNIQARC. PPR repeat units lie at residues 262-296, 297-331, 334-368, and 372-407; these read NGLV…SITP, SKDF…ATSI, SAET…PIDP, and TTFV…GLRP.

It belongs to the CCM1 family. Binds to mitochondrial small subunit 15S rRNA.

Its subcellular location is the mitochondrion. Its function is as follows. Regulates mitochondrial small subunit maturation by controlling 15S rRNA 5'-end processing. Localizes to the 5' precursor of the 15S rRNA in a position that is subsequently occupied by mS47 in the mature yeast mtSSU. Uses structure and sequence-specific RNA recognition, binding to a single-stranded region of the precursor and specifically recognizing bases -6 to -1. The exchange of Ccm1 for mS47 is coupled to the irreversible removal of precursor rRNA that is accompanied by conformational changes of the mitoribosomal proteins uS5m and mS26. These conformational changes signal completion of 5'-end rRNA processing through protection of the mature 5'-end of the 15S rRNA and stabilization of mS47. The removal of the 5' precursor together with the dissociation of Ccm1 may be catalyzed by the 5'-3' exoribonuclease Pet127. Involved in the specific removal of group I introns in mitochondrial encoded transcripts. The sequence is that of Mitochondrial 15S rRNA processing factor ppr3 from Schizosaccharomyces pombe (strain 972 / ATCC 24843) (Fission yeast).